A 156-amino-acid chain; its full sequence is Ribosomal RNA large subunit methyltransferase H (156 aa).

S-adenosyl-L-methionine is bound by residues L73, G104, and 123 to 128 (LSPLTL).

This sequence belongs to the RNA methyltransferase RlmH family. Homodimer.

It localises to the cytoplasm. The enzyme catalyses pseudouridine(1915) in 23S rRNA + S-adenosyl-L-methionine = N(3)-methylpseudouridine(1915) in 23S rRNA + S-adenosyl-L-homocysteine + H(+). Specifically methylates the pseudouridine at position 1915 (m3Psi1915) in 23S rRNA. The sequence is that of Ribosomal RNA large subunit methyltransferase H from Hahella chejuensis (strain KCTC 2396).